The following is a 456-amino-acid chain: Bifunctional protein GlmU (456 aa).

Residues 1 to 229 (MLNNAMSVVI…LSEVEGVNNR (229 aa)) form a pyrophosphorylase region. UDP-N-acetyl-alpha-D-glucosamine is bound by residues 11–14 (LAAG), Lys25, Gln76, 81–82 (GT), 103–105 (YGD), Gly140, Glu154, Asn169, and Asn227. Mg(2+) is bound at residue Asp105. Asn227 is a Mg(2+) binding site. Residues 230 to 250 (LQLSRLERVYQSEQAEKLLLA) form a linker region. The tract at residues 251-456 (GVMLRDPARF…EGWRRPVKKK (206 aa)) is N-acetyltransferase. UDP-N-acetyl-alpha-D-glucosamine contacts are provided by Arg333 and Lys351. His363 functions as the Proton acceptor in the catalytic mechanism. The UDP-N-acetyl-alpha-D-glucosamine site is built by Tyr366 and Asn377. Acetyl-CoA contacts are provided by residues Ala380, 386-387 (NY), Ser405, Ala423, and Arg440.

This sequence in the N-terminal section; belongs to the N-acetylglucosamine-1-phosphate uridyltransferase family. It in the C-terminal section; belongs to the transferase hexapeptide repeat family. Homotrimer. Requires Mg(2+) as cofactor.

It is found in the cytoplasm. The enzyme catalyses alpha-D-glucosamine 1-phosphate + acetyl-CoA = N-acetyl-alpha-D-glucosamine 1-phosphate + CoA + H(+). It carries out the reaction N-acetyl-alpha-D-glucosamine 1-phosphate + UTP + H(+) = UDP-N-acetyl-alpha-D-glucosamine + diphosphate. The protein operates within nucleotide-sugar biosynthesis; UDP-N-acetyl-alpha-D-glucosamine biosynthesis; N-acetyl-alpha-D-glucosamine 1-phosphate from alpha-D-glucosamine 6-phosphate (route II): step 2/2. Its pathway is nucleotide-sugar biosynthesis; UDP-N-acetyl-alpha-D-glucosamine biosynthesis; UDP-N-acetyl-alpha-D-glucosamine from N-acetyl-alpha-D-glucosamine 1-phosphate: step 1/1. It participates in bacterial outer membrane biogenesis; LPS lipid A biosynthesis. Its function is as follows. Catalyzes the last two sequential reactions in the de novo biosynthetic pathway for UDP-N-acetylglucosamine (UDP-GlcNAc). The C-terminal domain catalyzes the transfer of acetyl group from acetyl coenzyme A to glucosamine-1-phosphate (GlcN-1-P) to produce N-acetylglucosamine-1-phosphate (GlcNAc-1-P), which is converted into UDP-GlcNAc by the transfer of uridine 5-monophosphate (from uridine 5-triphosphate), a reaction catalyzed by the N-terminal domain. This is Bifunctional protein GlmU from Escherichia coli O8 (strain IAI1).